The chain runs to 286 residues: Shikimate dehydrogenase (NADP(+)) (286 aa).

Residues 22-24 and threonine 71 each bind shikimate; that span reads SRS. Lysine 75 functions as the Proton acceptor in the catalytic mechanism. Residue glutamate 87 coordinates NADP(+). Residues asparagine 96 and aspartate 111 each contribute to the shikimate site. NADP(+) contacts are provided by residues 136 to 140, 160 to 165, and isoleucine 225; these read GAGGA and NRTVER. Tyrosine 227 lines the shikimate pocket. Glycine 248 provides a ligand contact to NADP(+).

Belongs to the shikimate dehydrogenase family. Homodimer.

It carries out the reaction shikimate + NADP(+) = 3-dehydroshikimate + NADPH + H(+). Its pathway is metabolic intermediate biosynthesis; chorismate biosynthesis; chorismate from D-erythrose 4-phosphate and phosphoenolpyruvate: step 4/7. In terms of biological role, involved in the biosynthesis of the chorismate, which leads to the biosynthesis of aromatic amino acids. Catalyzes the reversible NADPH linked reduction of 3-dehydroshikimate (DHSA) to yield shikimate (SA). This Rhizobium rhizogenes (strain K84 / ATCC BAA-868) (Agrobacterium radiobacter) protein is Shikimate dehydrogenase (NADP(+)).